Reading from the N-terminus, the 155-residue chain is uncharacterized protein (155 aa).

The protein belongs to the mimivirus L6/L7/L57 family.

This is an uncharacterized protein from Acanthamoeba polyphaga (Amoeba).